The primary structure comprises 109 residues: Small ribosomal subunit protein eS25 (109 aa).

Residues 1–13 show a composition bias toward basic and acidic residues; sequence MVKKIQESKEKKA. The tract at residues 1-34 is disordered; the sequence is MVKKIQESKEKKALKAASGTRKDKKKWGDGRKKE.

Belongs to the eukaryotic ribosomal protein eS25 family.

In Encephalitozoon cuniculi (strain GB-M1) (Microsporidian parasite), this protein is Small ribosomal subunit protein eS25 (RPS25-1).